The chain runs to 125 residues: Fluoride-specific ion channel FluC (125 aa).

The next 4 membrane-spanning stretches (helical) occupy residues 6-26 (GFIALAGAAGTLARYWLSGLV), 34-54 (FPWGTAVVNILGCFLFGLVWE), 68-88 (AVLLTGFMGAFTTFSTFIFES), and 98-118 (LALLANLGFQTILGFAALFAG). 2 residues coordinate Na(+): Gly-76 and Thr-79.

The protein belongs to the fluoride channel Fluc/FEX (TC 1.A.43) family.

Its subcellular location is the cell inner membrane. The enzyme catalyses fluoride(in) = fluoride(out). Its activity is regulated as follows. Na(+) is not transported, but it plays an essential structural role and its presence is essential for fluoride channel function. In terms of biological role, fluoride-specific ion channel. Important for reducing fluoride concentration in the cell, thus reducing its toxicity. This Solidesulfovibrio magneticus (strain ATCC 700980 / DSM 13731 / RS-1) (Desulfovibrio magneticus) protein is Fluoride-specific ion channel FluC.